Here is a 336-residue protein sequence, read N- to C-terminus: Biotin synthase (336 aa).

Residues 57–286 (HHGKSIDLCS…RAIVRTAGGR (230 aa)) enclose the Radical SAM core domain. [4Fe-4S] cluster-binding residues include Cys75, Cys79, and Cys82. Residues Ser119, Cys151, Cys211, and Arg281 each coordinate [2Fe-2S] cluster.

This sequence belongs to the radical SAM superfamily. Biotin synthase family. Homodimer. [4Fe-4S] cluster is required as a cofactor. [2Fe-2S] cluster serves as cofactor.

It carries out the reaction (4R,5S)-dethiobiotin + (sulfur carrier)-SH + 2 reduced [2Fe-2S]-[ferredoxin] + 2 S-adenosyl-L-methionine = (sulfur carrier)-H + biotin + 2 5'-deoxyadenosine + 2 L-methionine + 2 oxidized [2Fe-2S]-[ferredoxin]. The protein operates within cofactor biosynthesis; biotin biosynthesis; biotin from 7,8-diaminononanoate: step 2/2. In terms of biological role, catalyzes the conversion of dethiobiotin (DTB) to biotin by the insertion of a sulfur atom into dethiobiotin via a radical-based mechanism. This Desulfotalea psychrophila (strain LSv54 / DSM 12343) protein is Biotin synthase.